A 596-amino-acid chain; its full sequence is Aspartate--tRNA(Asp/Asn) ligase (596 aa).

L-aspartate is bound at residue E182. Residues 206–209 (QLFK) are aspartate. Residue R228 participates in L-aspartate binding. ATP-binding positions include 228–230 (RDE) and Q237. H456 is a binding site for L-aspartate. Position 490 (E490) interacts with ATP. R497 provides a ligand contact to L-aspartate. 542 to 545 (GLDR) lines the ATP pocket.

Belongs to the class-II aminoacyl-tRNA synthetase family. Type 1 subfamily. In terms of assembly, homodimer.

The protein resides in the cytoplasm. The enzyme catalyses tRNA(Asx) + L-aspartate + ATP = L-aspartyl-tRNA(Asx) + AMP + diphosphate. Its function is as follows. Aspartyl-tRNA synthetase with relaxed tRNA specificity since it is able to aspartylate not only its cognate tRNA(Asp) but also tRNA(Asn). Reaction proceeds in two steps: L-aspartate is first activated by ATP to form Asp-AMP and then transferred to the acceptor end of tRNA(Asp/Asn). This chain is Aspartate--tRNA(Asp/Asn) ligase, found in Syntrophotalea carbinolica (strain DSM 2380 / NBRC 103641 / GraBd1) (Pelobacter carbinolicus).